The chain runs to 176 residues: Probable fimbrial subunit LpfE (176 aa).

The first 23 residues, 1–23 (MKFKRLLHSGIASLSLVACGVNA), serve as a signal peptide directing secretion.

The protein belongs to the fimbrial protein family.

The protein resides in the fimbrium. In terms of biological role, part of the lpfABCC'DE fimbrial operon. LP fimbriae may participate in the interaction with eukaryotic cells by assisting in microcolony formation. This is Probable fimbrial subunit LpfE (lpfE) from Escherichia coli O157:H7.